Reading from the N-terminus, the 635-residue chain is Dual specificity protein kinase zak2 (635 aa).

Protein kinase domains lie at 9-249 and 299-585; these read WEEI…HRLI and NKDD…QIYF. ATP-binding positions include 15-23 and Lys45; that span reads IGSCNSKSR. Asp124 (proton acceptor) is an active-site residue. Residues 305-313 and Lys326 contribute to the ATP site; that span reads GGDGFFSVV. The active-site Proton acceptor is Asp427.

The protein in the N-terminal section; belongs to the protein kinase superfamily. Ser/Thr protein kinase family. It in the C-terminal section; belongs to the protein kinase superfamily. TKL Tyr protein kinase family. C-terminal tyrosine kinase domain is capable of autophosphorylation, in vitro. As to expression, zakA and zak2 are coexpressed in prestalk cell population, zakA is enriched in pstB populations and zak1 in pstA populations. ZakA and zak2 are coexpressed in prespore cells, zakA expression levels are 10 fold higher than zak2.

It carries out the reaction L-seryl-[protein] + ATP = O-phospho-L-seryl-[protein] + ADP + H(+). The enzyme catalyses L-threonyl-[protein] + ATP = O-phospho-L-threonyl-[protein] + ADP + H(+). The catalysed reaction is L-tyrosyl-[protein] + ATP = O-phospho-L-tyrosyl-[protein] + ADP + H(+). Functionally, positive regulator of gsk3/gskA activity required for cell pattern formation and a downstream effector of carC. The kinases, gsk3/gskA, zakA and zak2, form part of a signaling pathway that responds to extracellular cyclic AMP. The pathway has a role in transcriptional regulation; required to direct prespore/spore fates during development. Zak2 negatively regulates prestalk differentiation by regulating expression of ecmA. Phosphorylates Y-214 of gsk3/gskA, in vitro. The polypeptide is Dual specificity protein kinase zak2 (zak2) (Dictyostelium discoideum (Social amoeba)).